Here is a 257-residue protein sequence, read N- to C-terminus: Imidazole glycerol phosphate synthase subunit HisF (257 aa).

Active-site residues include Asp-11 and Asp-130.

It belongs to the HisA/HisF family. As to quaternary structure, heterodimer of HisH and HisF.

It is found in the cytoplasm. It catalyses the reaction 5-[(5-phospho-1-deoxy-D-ribulos-1-ylimino)methylamino]-1-(5-phospho-beta-D-ribosyl)imidazole-4-carboxamide + L-glutamine = D-erythro-1-(imidazol-4-yl)glycerol 3-phosphate + 5-amino-1-(5-phospho-beta-D-ribosyl)imidazole-4-carboxamide + L-glutamate + H(+). The protein operates within amino-acid biosynthesis; L-histidine biosynthesis; L-histidine from 5-phospho-alpha-D-ribose 1-diphosphate: step 5/9. Its function is as follows. IGPS catalyzes the conversion of PRFAR and glutamine to IGP, AICAR and glutamate. The HisF subunit catalyzes the cyclization activity that produces IGP and AICAR from PRFAR using the ammonia provided by the HisH subunit. This is Imidazole glycerol phosphate synthase subunit HisF from Aeromonas hydrophila subsp. hydrophila (strain ATCC 7966 / DSM 30187 / BCRC 13018 / CCUG 14551 / JCM 1027 / KCTC 2358 / NCIMB 9240 / NCTC 8049).